Reading from the N-terminus, the 179-residue chain is Probable chorismate pyruvate-lyase (179 aa).

Substrate-binding residues include R82, L120, and E165.

This sequence belongs to the UbiC family.

It localises to the cytoplasm. The catalysed reaction is chorismate = 4-hydroxybenzoate + pyruvate. It functions in the pathway cofactor biosynthesis; ubiquinone biosynthesis. Its function is as follows. Removes the pyruvyl group from chorismate, with concomitant aromatization of the ring, to provide 4-hydroxybenzoate (4HB) for the ubiquinone pathway. The chain is Probable chorismate pyruvate-lyase from Vibrio parahaemolyticus serotype O3:K6 (strain RIMD 2210633).